We begin with the raw amino-acid sequence, 201 residues long: Recombination protein RecR (201 aa).

A C4-type zinc finger spans residues C60–C75. Residues T83 to P178 enclose the Toprim domain.

It belongs to the RecR family.

May play a role in DNA repair. It seems to be involved in an RecBC-independent recombinational process of DNA repair. It may act with RecF and RecO. In Methylobacterium radiotolerans (strain ATCC 27329 / DSM 1819 / JCM 2831 / NBRC 15690 / NCIMB 10815 / 0-1), this protein is Recombination protein RecR.